A 103-amino-acid polypeptide reads, in one-letter code: Co-chaperonin GroES (103 aa).

This sequence belongs to the GroES chaperonin family. As to quaternary structure, heptamer of 7 subunits arranged in a ring. Interacts with the chaperonin GroEL.

It localises to the cytoplasm. Together with the chaperonin GroEL, plays an essential role in assisting protein folding. The GroEL-GroES system forms a nano-cage that allows encapsulation of the non-native substrate proteins and provides a physical environment optimized to promote and accelerate protein folding. GroES binds to the apical surface of the GroEL ring, thereby capping the opening of the GroEL channel. The sequence is that of Co-chaperonin GroES from Trichodesmium erythraeum (strain IMS101).